The chain runs to 237 residues: Flagellar L-ring protein (237 aa).

Positions 1–24 (MNRLSVPRFSVLIASLCGITLLSG) are cleaved as a signal peptide. C25 carries the N-palmitoyl cysteine lipid modification. C25 carries the S-diacylglycerol cysteine lipid modification.

Belongs to the FlgH family. As to quaternary structure, the basal body constitutes a major portion of the flagellar organelle and consists of four rings (L,P,S, and M) mounted on a central rod.

The protein resides in the cell outer membrane. It localises to the bacterial flagellum basal body. Functionally, assembles around the rod to form the L-ring and probably protects the motor/basal body from shearing forces during rotation. The polypeptide is Flagellar L-ring protein (Pseudomonas syringae pv. syringae (strain B728a)).